The primary structure comprises 172 residues: Mesogenin-1 (172 aa).

A disordered region spans residues 1–69 (METLHHPLVK…SPYSSSSHTQ (69 aa)). Over residues 18 to 29 (SSDSEPNSSCMA) the composition is skewed to polar residues. Low complexity predominate over residues 42–66 (SLSQTPSPQSLSPAVSYESPYSSSS). Residues 108–162 (QRRRKASEREKLRMRAIAEALHTLRNNLPPMYSQGRQPLTKIQTLKCTINYISEL) form the bHLH domain.

The protein resides in the nucleus. In terms of biological role, involved in specifying the paraxial, but not dorsal, mesoderm. May regulate the expression of T-box transcription factors required for mesoderm formation and differentiation, such as brachyury T, wnt8, vegt and eomes. The polypeptide is Mesogenin-1 (msgn1) (Xenopus tropicalis (Western clawed frog)).